The primary structure comprises 160 residues: Peripheral myelin protein 22 (160 aa).

Residue Met1 is a topological domain, cytoplasmic. Residues 2–31 (LLLLLSIIVLHVAVLVLLFVSTIVSQWIVG) form a helical membrane-spanning segment. Residues 32 to 64 (NGHATDLWQNCSTSSSGNVHHCFSSSPNEWLQS) lie on the Extracellular side of the membrane. N-linked (GlcNAc...) asparagine glycosylation occurs at Asn41. Residues 65–91 (VQATMILSIIFSILSLFLFFCQLFTLT) traverse the membrane as a helical segment. The Cytoplasmic portion of the chain corresponds to 92–95 (KGGR). The helical transmembrane segment at 96 to 119 (FYITGIFQILAGLCVMSAAAIYTV) threads the bilayer. At 120 to 133 (RHPEWHLNSDYSYG) the chain is on the extracellular side. Residues 134-156 (FAYILAWVAFPLALLSGVIYVIL) form a helical membrane-spanning segment. Topologically, residues 157–160 (RKRE) are cytoplasmic.

It belongs to the PMP-22/EMP/MP20 family. In terms of processing, ubiquitinated by the DCX(DCAF13) E3 ubiquitin ligase complex, leading to its degradation.

The protein resides in the cell membrane. Its function is as follows. Might be involved in growth regulation, and in myelinization in the peripheral nervous system. The sequence is that of Peripheral myelin protein 22 (PMP22) from Homo sapiens (Human).